We begin with the raw amino-acid sequence, 167 residues long: Small ribosomal subunit protein uS5 (167 aa).

In terms of domain architecture, S5 DRBM spans 12-75 (LREKLITINR…ERARGGMRTV (64 aa)).

The protein belongs to the universal ribosomal protein uS5 family. As to quaternary structure, part of the 30S ribosomal subunit. Contacts proteins S4 and S8.

With S4 and S12 plays an important role in translational accuracy. In terms of biological role, located at the back of the 30S subunit body where it stabilizes the conformation of the head with respect to the body. The protein is Small ribosomal subunit protein uS5 of Halorhodospira halophila (strain DSM 244 / SL1) (Ectothiorhodospira halophila (strain DSM 244 / SL1)).